The following is a 164-amino-acid chain: UPF0114 protein Sbal_0780 (164 aa).

The next 4 membrane-spanning stretches (helical) occupy residues 15 to 35 (IMAP…VKFF), 53 to 73 (LVLL…IVMV), 109 to 129 (VAAS…MNAE), and 136 to 156 (IMWY…MGYL).

It belongs to the UPF0114 family.

It is found in the cell membrane. This chain is UPF0114 protein Sbal_0780, found in Shewanella baltica (strain OS155 / ATCC BAA-1091).